The sequence spans 188 residues: Phosphatidylinositol N-acetylglucosaminyltransferase subunit H (188 aa).

The protein belongs to the PIGH family. Component of the glycosylphosphatidylinositol-N-acetylglucosaminyltransferase (GPI-GnT) complex composed at least by PIGA, PIGC, PIGH, PIGP, PIGQ, PIGY and DPM2. Interacts with PIGQ.

The protein localises to the cytoplasm. Its pathway is glycolipid biosynthesis; glycosylphosphatidylinositol-anchor biosynthesis. Functionally, part of the glycosylphosphatidylinositol-N-acetylglucosaminyltransferase (GPI-GnT) complex that catalyzes the transfer of N-acetylglucosamine from UDP-N-acetylglucosamine to phosphatidylinositol and participates in the first step of GPI biosynthesis. In Mus musculus (Mouse), this protein is Phosphatidylinositol N-acetylglucosaminyltransferase subunit H.